We begin with the raw amino-acid sequence, 543 residues long: DM7 family protein GG19680 (543 aa).

Basic and acidic residues predominate over residues 415–430 (GETQEMDEAHPTKEES). Residues 415–443 (GETQEMDEAHPTKEESKSEEEGEVQSGSQ) form a disordered region.

It belongs to the DM7 family.

This is DM7 family protein GG19680 from Drosophila erecta (Fruit fly).